The primary structure comprises 106 residues: UPF0060 membrane protein Oant_2511 (106 aa).

The next 4 membrane-spanning stretches (helical) occupy residues 3–23 (FAIY…FWAW), 30–50 (PLWL…LTLI), 60–80 (AAYG…AEGA), and 84–104 (RWDV…LFAP).

It belongs to the UPF0060 family.

It localises to the cell inner membrane. The chain is UPF0060 membrane protein Oant_2511 from Brucella anthropi (strain ATCC 49188 / DSM 6882 / CCUG 24695 / JCM 21032 / LMG 3331 / NBRC 15819 / NCTC 12168 / Alc 37) (Ochrobactrum anthropi).